Here is a 249-residue protein sequence, read N- to C-terminus: Phycobilisome 27.9 kDa linker polypeptide, phycoerythrin-associated, rod (249 aa).

In terms of domain architecture, PBS-linker spans 2–166 (ASQTILELWP…LDRGPAQIDS (165 aa)). One can recognise a CpcD-like domain in the interval 198–248 (EKRFKILVQGSKFDSPRRISTTEYIVPASKMTPQIQRINRTSGKIVSITEI).

The protein belongs to the phycobilisome linker protein family. The phycobilisome is a hemidiscoidal structure that is composed of two distinct substructures: a core complex and six rods radiating from the core.

The protein localises to the cellular thylakoid membrane. Functionally, rod linker protein, associated with phycoerythrin. Linker polypeptides determine the state of aggregation and the location of the disk-shaped phycobiliprotein units within the phycobilisome and modulate their spectroscopic properties in order to mediate a directed and optimal energy transfer. In Microchaete diplosiphon (Fremyella diplosiphon), this protein is Phycobilisome 27.9 kDa linker polypeptide, phycoerythrin-associated, rod (cpeD).